The primary structure comprises 202 residues: Dephospho-CoA kinase (202 aa).

In terms of domain architecture, DPCK spans 6 to 202 (KISVTGDPSS…QCFKALKGTI (197 aa)). 14–19 (SSGKTE) contributes to the ATP binding site.

Belongs to the CoaE family.

The protein localises to the cytoplasm. It catalyses the reaction 3'-dephospho-CoA + ATP = ADP + CoA + H(+). Its pathway is cofactor biosynthesis; coenzyme A biosynthesis; CoA from (R)-pantothenate: step 5/5. Catalyzes the phosphorylation of the 3'-hydroxyl group of dephosphocoenzyme A to form coenzyme A. This chain is Dephospho-CoA kinase, found in Chlamydia trachomatis serovar D (strain ATCC VR-885 / DSM 19411 / UW-3/Cx).